The following is a 352-amino-acid chain: Fatty acid synthase (352 aa).

The Ketosynthase family 3 (KS3) domain occupies 1–352 (MEDVVIAGIA…KVVLSLEHGL (352 aa)). Active-site for beta-ketoacyl synthase activity residues include C161, H293, and H331.

In terms of assembly, homodimer which monomers are arranged in a head to tail fashion.

It carries out the reaction acetyl-CoA + n malonyl-CoA + 2n NADPH + 2n H(+) = a long-chain fatty acid + (n+1) CoA + n CO2 + 2n NADP(+).. Fatty acid synthetase catalyzes the formation of long-chain fatty acids from acetyl-CoA, malonyl-CoA and NADPH. This multifunctional protein has 7 catalytic activities as an acyl carrier protein. The chain is Fatty acid synthase (FASN) from Anser anser anser (Western greylag goose).